We begin with the raw amino-acid sequence, 105 residues long: Phosphoribosyl-ATP pyrophosphatase (105 aa).

The protein belongs to the PRA-PH family.

It is found in the cytoplasm. It catalyses the reaction 1-(5-phospho-beta-D-ribosyl)-ATP + H2O = 1-(5-phospho-beta-D-ribosyl)-5'-AMP + diphosphate + H(+). It participates in amino-acid biosynthesis; L-histidine biosynthesis; L-histidine from 5-phospho-alpha-D-ribose 1-diphosphate: step 2/9. In Methylococcus capsulatus (strain ATCC 33009 / NCIMB 11132 / Bath), this protein is Phosphoribosyl-ATP pyrophosphatase.